A 24-amino-acid chain; its full sequence is Calcium-binding shell glycoprotein P50 (24 aa).

Positions 1–24 are disordered; that stretch reads KDALEHTGFAPKKDGEEHVEWNYN.

In terms of processing, glycosylated. In terms of tissue distribution, nacreous and prismatic layers of the shell.

Functionally, calcium-binding. The sequence is that of Calcium-binding shell glycoprotein P50 from Unio pictorum (Painter's mussel).